The following is a 792-amino-acid chain: Endonuclease MutS2 (792 aa).

Residue 335-342 coordinates ATP; that stretch reads GPNTGGKT. The 76-residue stretch at 717–792 folds into the Smr domain; sequence VDLRGLNLEE…GAGVTIVKLK (76 aa).

The protein belongs to the DNA mismatch repair MutS family. MutS2 subfamily. As to quaternary structure, homodimer. Binds to stalled ribosomes, contacting rRNA.

Its function is as follows. Endonuclease that is involved in the suppression of homologous recombination and thus may have a key role in the control of bacterial genetic diversity. Acts as a ribosome collision sensor, splitting the ribosome into its 2 subunits. Detects stalled/collided 70S ribosomes which it binds and splits by an ATP-hydrolysis driven conformational change. Acts upstream of the ribosome quality control system (RQC), a ribosome-associated complex that mediates the extraction of incompletely synthesized nascent chains from stalled ribosomes and their subsequent degradation. Probably generates substrates for RQC. In Clostridioides difficile (strain 630) (Peptoclostridium difficile), this protein is Endonuclease MutS2.